The chain runs to 268 residues: Energy-coupling factor transporter transmembrane protein EcfT (268 aa).

The next 6 helical transmembrane spans lie at 26-46 (ILAVLFYMVMVFLANSPLSYG), 47-67 (ILIGFIVLGAALAKLPAGLLL), 73-93 (LWIIILLTMVIHFVTDPGEAL), 116-136 (LVLLLLVSSLMTFTTSPIVLT), 151-171 (VPAHELAMMMTIALRFIPTLL), and 246-266 (ALTGLVMLALFVLLAFLRWGI).

Belongs to the energy-coupling factor EcfT family. In terms of assembly, forms a stable energy-coupling factor (ECF) transporter complex composed of 2 membrane-embedded substrate-binding proteins (S component), 2 ATP-binding proteins (A component) and 2 transmembrane proteins (T component). May be able to interact with more than 1 S component at a time.

It localises to the cell membrane. In terms of biological role, transmembrane (T) component of an energy-coupling factor (ECF) ABC-transporter complex. Unlike classic ABC transporters this ECF transporter provides the energy necessary to transport a number of different substrates. The chain is Energy-coupling factor transporter transmembrane protein EcfT from Acidaminococcus fermentans (strain ATCC 25085 / DSM 20731 / CCUG 9996 / CIP 106432 / VR4).